The following is a 476-amino-acid chain: MKKRQDKIRQMVPSMRRVHQIHFVGIGGAGMGGIAEVLLNEGYDITGSDIAENAVTGRLSSLGGKIFIGHAATNVENASVVVVSSAIKPDNVEVVAAHEKRIPVIQRAQMLAELMRFRHGIAIAGTHGKTTTTAMISMIYTQAGLDPTFVNGGLVKSAGTNAYLGASRYLIAEADESDASFLHLQPMVSVVTNIEPDHMDTYHGDFDEMKRTYVNFLHNLPFYGLAVMCADDAVLMELVPQVGRQVITYGFSEKADYRIENYEQTGFQGHYDVITPAGERIHILLNVPGKHNALNATAALVVAKEEGIGNDAILAALADFQGAGRRFDQLGEFIRPNGKVMLVDDYGHHPTEVGVTIQAARSGWENRRVVMVFQPHRYSRTRDLFDDFVRVLSQVDVLILLDVYPAGEQPIAGADSRSLARSIRNLGKVDPIFVADHGQLPEVVDQIIQDGDLILAQGAGNVSRLSRNLVEHWTKA.

Residue 125–131 (GTHGKTT) coordinates ATP.

This sequence belongs to the MurCDEF family.

The protein resides in the cytoplasm. It catalyses the reaction UDP-N-acetyl-alpha-D-muramate + L-alanine + ATP = UDP-N-acetyl-alpha-D-muramoyl-L-alanine + ADP + phosphate + H(+). The protein operates within cell wall biogenesis; peptidoglycan biosynthesis. Cell wall formation. This Actinobacillus succinogenes (strain ATCC 55618 / DSM 22257 / CCUG 43843 / 130Z) protein is UDP-N-acetylmuramate--L-alanine ligase.